The sequence spans 236 residues: Ribosome-inactivating protein saporin-3 (236 aa).

Glu148 is a catalytic residue.

This sequence belongs to the ribosome-inactivating protein family. Type 1 RIP subfamily.

The enzyme catalyses Endohydrolysis of the N-glycosidic bond at one specific adenosine on the 28S rRNA.. Functionally, ribosome-inactivating protein of type 1, inhibits protein synthesis in animal cells. Useful as immunotoxin for pharmacological applications. The polypeptide is Ribosome-inactivating protein saporin-3 (SAP3) (Saponaria officinalis (Common soapwort)).